We begin with the raw amino-acid sequence, 419 residues long: DNA ligase (419 aa).

Residues 1 to 120 are NTD; sequence MLNHFPGHCS…ARQKRGAHTN (120 aa). Positions 121–317 are AD domain; sequence RGMIPPMLVK…NYHSAHLAKL (197 aa). The active-site N6-AMP-lysine intermediate is the K151. The ATP site is built by K151, E203, and F232. E203 is an a divalent metal cation binding site. E291 contributes to the a divalent metal cation binding site. I294 and K316 together coordinate ATP. Residues 318–419 are OB domain; that stretch reads KPLLDAEFIL…REPINVLEII (102 aa).

The protein belongs to the ATP-dependent DNA ligase family.

The protein resides in the virion. It catalyses the reaction ATP + (deoxyribonucleotide)n-3'-hydroxyl + 5'-phospho-(deoxyribonucleotide)m = (deoxyribonucleotide)n+m + AMP + diphosphate.. Its function is as follows. Very low-fidelity DNA ligase that seals nicks in double-stranded DNA during DNA repair. Together with the viral repair DNA polymerase X, fills the single nucleotide gaps generated by the AP endonuclease. It is not essential for viral replication and recombination. Displays a very low adenylation activity towards DNA with 3'-dideoxy- or 3'-amino-terminated nicks compared to regular nick DNA. The protein is DNA ligase of African swine fever virus (isolate Tick/South Africa/Pretoriuskop Pr4/1996) (ASFV).